Here is a 140-residue protein sequence, read N- to C-terminus: Nucleoside diphosphate kinase (140 aa).

The ATP site is built by Lys-11, Phe-59, Arg-87, Thr-93, Arg-104, and Asn-114. Residue His-117 is the Pros-phosphohistidine intermediate of the active site.

Belongs to the NDK family. In terms of assembly, homotetramer. The cofactor is Mg(2+).

Its subcellular location is the cytoplasm. It carries out the reaction a 2'-deoxyribonucleoside 5'-diphosphate + ATP = a 2'-deoxyribonucleoside 5'-triphosphate + ADP. The catalysed reaction is a ribonucleoside 5'-diphosphate + ATP = a ribonucleoside 5'-triphosphate + ADP. Major role in the synthesis of nucleoside triphosphates other than ATP. The ATP gamma phosphate is transferred to the NDP beta phosphate via a ping-pong mechanism, using a phosphorylated active-site intermediate. The chain is Nucleoside diphosphate kinase from Rhizobium etli (strain CIAT 652).